Reading from the N-terminus, the 624-residue chain is Phosphomethylpyrimidine synthase (624 aa).

The segment at 48–70 is disordered; that stretch reads SDTHTSQGREKNPPLTVYDTSGP. Substrate is bound by residues asparagine 229, methionine 258, tyrosine 287, histidine 323, 343-345, 384-387, and glutamate 423; these read SRG and DGLR. Position 427 (histidine 427) interacts with Zn(2+). Position 450 (tyrosine 450) interacts with substrate. Histidine 491 lines the Zn(2+) pocket. Residues cysteine 571, cysteine 574, and cysteine 579 each contribute to the [4Fe-4S] cluster site.

It belongs to the ThiC family. Homodimer. The cofactor is [4Fe-4S] cluster.

The catalysed reaction is 5-amino-1-(5-phospho-beta-D-ribosyl)imidazole + S-adenosyl-L-methionine = 4-amino-2-methyl-5-(phosphooxymethyl)pyrimidine + CO + 5'-deoxyadenosine + formate + L-methionine + 3 H(+). Its pathway is cofactor biosynthesis; thiamine diphosphate biosynthesis. Its function is as follows. Catalyzes the synthesis of the hydroxymethylpyrimidine phosphate (HMP-P) moiety of thiamine from aminoimidazole ribotide (AIR) in a radical S-adenosyl-L-methionine (SAM)-dependent reaction. This Nitrosococcus oceani (strain ATCC 19707 / BCRC 17464 / JCM 30415 / NCIMB 11848 / C-107) protein is Phosphomethylpyrimidine synthase.